Reading from the N-terminus, the 265-residue chain is Small ribosomal subunit protein uS2 (265 aa).

Residues 231–265 are disordered; it reads VEEEYEDYEGSEEDYDYDETEYADSVIPEDGEEAE.

Belongs to the universal ribosomal protein uS2 family.

This Nostoc sp. (strain PCC 7120 / SAG 25.82 / UTEX 2576) protein is Small ribosomal subunit protein uS2.